Here is a 57-residue protein sequence, read N- to C-terminus: RPYACELIVAAGPCMFFISAFYYSKGANKCYPFTYSGCRGNANRFKTIEECRRTCVV.

Residues 5 to 55 (CELIVAAGPCMFFISAFYYSKGANKCYPFTYSGCRGNANRFKTIEECRRTC) form the BPTI/Kunitz inhibitor domain. 3 cysteine pairs are disulfide-bonded: Cys5–Cys55, Cys14–Cys38, and Cys30–Cys51.

This sequence belongs to the venom Kunitz-type family. As to expression, expressed by the venom gland.

It is found in the secreted. Functionally, the mixture of mambaquaretin-7 and mambaquaretin-8 interacts with vasopressin V2 receptor (V2R/AVPR2), probably in a selective manner. This mixture inhibits vasopressin binding human V2R in the nanomolar range (Ki=3.14 nM), and also potently inhibits vasopressin-induced cAMP production (IC(50)=58 nM). In vivo, intraperitoneal injection of this protein into rats increases diuresis, without any loss of electrolytes. This chain is Mambaquaretin-7, found in Dendroaspis polylepis polylepis (Black mamba).